The sequence spans 409 residues: MATHVAIIGNGVGGFTTAQALRAEGFEGRISLIGDEPHLPYDRPSLSKAVLDGSLERPPILAEADWYGEARIDMLTGPEVTALDVQTRTISLDDGTTLSADAIVIATGSRARTMALPGSQLPGVVTLRTYGDVQVLRDSWTSATRLLIVGGGLIGCEVATTARKLGLSVTILEAGDELLVRVLGRRIGAWLRGLLTELGVQVELGTGVVGFSGEGQLEQVMASDGRSFVADSALICVGAEPADQLARQAGLACDRGVIVDHCGATLAKGYSPSEMWPVGAAAGGRRSLETYMNAQRQAAAVAAAILGKNVSAPQLPVSWTEIAGHRMQMAGDIEGPGDFVSRGMPGSGAALLFRLQERRIQAVVAVDAPRDFALATRLVEARAAIEPARLADLSNSMRDFVRANEGDLT.

His-4–Asp-35 contributes to the FAD binding site. An NAD(+)-binding site is contributed by Arg-145 to Glu-173.

Belongs to the bacterial ring-hydroxylating dioxygenase ferredoxin reductase family. As to quaternary structure, this dioxygenase system consists of four proteins: the two subunits of the hydroxylase component (todC1 and todC2), a ferredoxin (TodB) and a ferredoxin reductase (TodA). FAD is required as a cofactor.

The enzyme catalyses 2 reduced [2Fe-2S]-[ferredoxin] + NAD(+) + H(+) = 2 oxidized [2Fe-2S]-[ferredoxin] + NADH. It functions in the pathway xenobiotic degradation; toluene degradation. In terms of biological role, part of the electron transfer component of toluene 1,2-dioxygenase, transfers electrons from ferredoxin (TodB) to NADH. The chain is Toluene 1,2-dioxygenase system ferredoxin--NAD(+) reductase component (todA) from Pseudomonas putida (Arthrobacter siderocapsulatus).